Consider the following 439-residue polypeptide: Homogentisate 1,2-dioxygenase (439 aa).

The active-site Proton acceptor is the His289. Fe cation is bound by residues His332 and Glu338. Homogentisate-binding residues include Tyr347 and His368. His368 lines the Fe cation pocket.

Belongs to the homogentisate dioxygenase family. As to quaternary structure, hexamer; dimer of trimers. Requires Fe cation as cofactor.

The catalysed reaction is homogentisate + O2 = 4-maleylacetoacetate + H(+). Its pathway is amino-acid degradation; L-phenylalanine degradation; acetoacetate and fumarate from L-phenylalanine: step 4/6. Functionally, involved in the catabolism of homogentisate (2,5-dihydroxyphenylacetate or 2,5-OH-PhAc), a central intermediate in the degradation of phenylalanine and tyrosine. Catalyzes the oxidative ring cleavage of the aromatic ring of homogentisate to yield maleylacetoacetate. This is Homogentisate 1,2-dioxygenase from Xanthomonas euvesicatoria pv. vesicatoria (strain 85-10) (Xanthomonas campestris pv. vesicatoria).